Here is a 135-residue protein sequence, read N- to C-terminus: Small ribosomal subunit protein uS17 (135 aa).

Residues 1 to 59 form a disordered region; it reads MAEAKTGAKAAPRVAKAAKAAPKKAAPNDAEAIGAANAANVKGPKHTPRTPKPRGRRKT. A compositionally biased stretch (low complexity) spans 8-42; that stretch reads AKAAPRVAKAAKAAPKKAAPNDAEAIGAANAANVK. A compositionally biased stretch (basic residues) spans 43-59; it reads GPKHTPRTPKPRGRRKT.

Belongs to the universal ribosomal protein uS17 family. As to quaternary structure, part of the 30S ribosomal subunit.

One of the primary rRNA binding proteins, it binds specifically to the 5'-end of 16S ribosomal RNA. The polypeptide is Small ribosomal subunit protein uS17 (Mycobacterium bovis (strain ATCC BAA-935 / AF2122/97)).